The primary structure comprises 358 residues: C-X-C chemokine receptor type 4 (358 aa).

Residues 1–25 are important for chemokine binding and signaling; sequence MDGFSGGIDINIFDSNSTENGSGDF. At 1-44 the chain is on the extracellular side; sequence MDGFSGGIDINIFDSNSTENGSGDFEDFSEPCFMHDNSDFNRIF. Residues Asn16 and Asn20 are each glycosylated (N-linked (GlcNAc...) asparagine). 2 cysteine pairs are disulfide-bonded: Cys32–Cys281 and Cys113–Cys190. The chain crosses the membrane as a helical span at residues 45–67; sequence LPTIYSFIFLLGIIGNGLVVVVM. Topologically, residues 68–81 are cytoplasmic; sequence GYQKKSRTMTDKYR. The chain crosses the membrane as a helical span at residues 82-103; sequence LHLSVADLLFVFTLPFWSVDAA. The tract at residues 98–101 is chemokine binding; the sequence is WSVD. Over 104–114 the chain is Extracellular; sequence IGWYFKEFLCK. Residues 115 to 134 form a helical membrane-spanning segment; it reads AVHVIYTVNLYSSVLILAFI. Residues 117–121 are chemokine binding; it reads HVIYT. At 135 to 158 the chain is on the cytoplasmic side; that stretch reads SLDRYLAIVHATNSQGSRKMLADK. The tract at residues 139–151 is involved in dimerization; when bound to chemokine; the sequence is YLAIVHATNSQGS. The helical transmembrane segment at 159 to 178 threads the bilayer; the sequence is VVYAGVWLPALLLTVPDLVF. Over 179-202 the chain is Extracellular; the sequence is ARVSDENGQFVCDRIYPIDNRETW. Residues 190–194 form a chemokine binding, important for signaling region; the sequence is CDRIY. Residues 203 to 223 traverse the membrane as a helical segment; sequence TVGFRFLHITVGLILPGLIIL. The Cytoplasmic portion of the chain corresponds to 224–248; it reads ICYCVIISKLSHSKGHQKRKALKTT. Residues 249 to 268 traverse the membrane as a helical segment; that stretch reads VILILAFFACWLPYYVCLTT. The Extracellular segment spans residues 269 to 289; that stretch reads DTFMLLGLLKADCIWENTLHK. Residues 290 to 309 traverse the membrane as a helical segment; sequence AISITEALAFFHCCLNPILY. Topologically, residues 310–358 are cytoplasmic; it reads AFLGAKFKTSAQNAFTSVSRGSSLKILSKKRAGLSSVSTESESSSFHSS. A disordered region spans residues 338 to 358; that stretch reads KKRAGLSSVSTESESSSFHSS. Residues 344 to 358 show a composition bias toward low complexity; the sequence is SSVSTESESSSFHSS.

The protein belongs to the G-protein coupled receptor 1 family. In terms of assembly, monomer. Can form dimers. Post-translationally, sulfation is required for efficient binding of cxcl12/sdf-1alpha and promotes its dimerization. In terms of processing, O- and N-glycosylated.

It is found in the cell membrane. The protein resides in the cytoplasm. It localises to the nucleus. The protein localises to the early endosome. Its subcellular location is the late endosome. It is found in the lysosome. Its function is as follows. Receptor for the C-X-C chemokine cxcl12/sdf-1. Transduces a signal by increasing the intracellular calcium ion level. Signaling with cxcl12/sdf-1 mediates the directional movement of mesodermal cells during gastrulation. May play a role in the migration of embryonic presumptive primordial germ cells (pPGCs). May also be involved in regulating migration of hematopoietic stem cells into the larval liver. The sequence is that of C-X-C chemokine receptor type 4 from Xenopus tropicalis (Western clawed frog).